A 337-amino-acid chain; its full sequence is Anthranilate phosphoribosyltransferase (337 aa).

5-phospho-alpha-D-ribose 1-diphosphate is bound by residues G80, 83 to 84 (GD), T88, 90 to 93 (NIST), 108 to 116 (KHGNRAVSS), and S120. G80 is a binding site for anthranilate. A Mg(2+)-binding site is contributed by S92. N111 contributes to the anthranilate binding site. R166 provides a ligand contact to anthranilate. D224 and E225 together coordinate Mg(2+).

This sequence belongs to the anthranilate phosphoribosyltransferase family. As to quaternary structure, homodimer. The cofactor is Mg(2+).

It catalyses the reaction N-(5-phospho-beta-D-ribosyl)anthranilate + diphosphate = 5-phospho-alpha-D-ribose 1-diphosphate + anthranilate. It participates in amino-acid biosynthesis; L-tryptophan biosynthesis; L-tryptophan from chorismate: step 2/5. Catalyzes the transfer of the phosphoribosyl group of 5-phosphorylribose-1-pyrophosphate (PRPP) to anthranilate to yield N-(5'-phosphoribosyl)-anthranilate (PRA). This is Anthranilate phosphoribosyltransferase from Anaeromyxobacter dehalogenans (strain 2CP-1 / ATCC BAA-258).